The sequence spans 1515 residues: Neurite extension and migration factor (1515 aa).

Residues 381–405 show a composition bias toward basic and acidic residues; sequence DKKKGKEEVHEDKSIETKDEKDNGE. Disordered regions lie at residues 381 to 415, 505 to 529, 731 to 774, 1158 to 1225, 1372 to 1422, and 1435 to 1479; these read DKKKGKEEVHEDKSIETKDEKDNGEKPALNNKPCG, VNERKEWPPGGSKEEDDDEWCPKKR, KKIK…HMSE, FDEP…TKKG, TPQE…EDSR, and TLGN…AGTT. Polar residues-rich tracts occupy residues 746–757 and 763–772; these read SPVSEDTSSKAN and TPGTSNSSHM. Positions 1180–1193 are enriched in low complexity; sequence PGKSGAVSQSSSQK. A compositionally biased stretch (basic residues) spans 1442-1452; the sequence is THKKLYRHKSS. Residues 1455–1479 are compositionally biased toward basic and acidic residues; sequence GLRDEKYKGKRVEREQAHKDEAGTT.

In terms of tissue distribution, expressed in the brain, particularly during the late embryonic and perinatal stages of development. In the developing brain, it is expressed only in the cortical plate and subplate region but not in the intermediate or ventricular zone.

It is found in the nucleus. The protein localises to the cytoplasm. Functionally, involved in neurite outgrowth by regulating cell-cell adhesion via the N-cadherin signaling pathway. May act by regulating expression of protein-coding genes, such as N-cadherins and integrin beta-1 (ITGB1). This chain is Neurite extension and migration factor, found in Mus musculus (Mouse).